The chain runs to 511 residues: E3 ubiquitin-protein ligase TRIM7 (511 aa).

Residues 29–82 (CSICLELFREPVSVECGHSFCRACIGRCWERPGAGSVGAATRAPPFPLPCPQCR) form an RING-type zinc finger. A Phosphoserine; by RPS6KA5 modification is found at Ser107. Residues 125-166 (AAAARCGQHGEPFKLYCQDDGRAICVVCDRAREHREHAVLPL) form a B box-type zinc finger. 4 residues coordinate Zn(2+): Cys130, His133, Cys152, and His158. The stretch at 166–263 (LDEAVQEAKE…AQLGVEITQL (98 aa)) forms a coiled coil. A B30.2/SPRY domain is found at 324–511 (MLKKFKEDLR…STGTYLRIWP (188 aa)).

The protein belongs to the TRIM/RBCC family. In terms of assembly, forms homodimers. Interacts with GNIP2. Interacts with GYG1. Interacts with RNF187 (via C-terminus). Phosphorylated at Ser-107 by RPS6KA5/MSK1, which stimulates the ubiquitin ligase activity. Post-translationally, auto-ubiquitinates via 'Lys-63'-linked polyubiquitination. In terms of tissue distribution, skeletal muscle and placenta, at lower levels in heart, brain and pancreas. Isoform 1 is widely expressed with high level in testis, kidney and heart.

The protein resides in the nucleus. It is found in the cytoplasm. Its subcellular location is the golgi apparatus. It carries out the reaction S-ubiquitinyl-[E2 ubiquitin-conjugating enzyme]-L-cysteine + [acceptor protein]-L-lysine = [E2 ubiquitin-conjugating enzyme]-L-cysteine + N(6)-ubiquitinyl-[acceptor protein]-L-lysine.. Its pathway is protein modification; protein ubiquitination. E3 ubiquitin-protein ligase that have both tumor-promoting and tumor-suppressing activities and functions in several biological processes including innate immunity, regulation of ferroptosis as well as cell proliferation and migration. Acts as an antiviral effector against multiple viruses by targeting specific viral proteins for ubiquitination and degradation including norovirus NTPase protein or SARS-CoV-2 NSP5 and NSP8 proteins. Mechanistically, recognizes the C-terminal glutamine-containing motif usually generated by viral proteases that process the polyproteins and trigger their ubiquitination and subsequent degradation. Mediates 'Lys-63'-linked polyubiquitination and stabilization of the JUN coactivator RNF187 in response to growth factor signaling via the MEK/ERK pathway, thereby regulating JUN transactivation and cellular proliferation. Promotes the TLR4-mediated signaling activation through its E3 ligase domain leading to production of pro-inflammatory cytokines and type I interferon. Also plays a negative role in the regulation of exogenous cytosolic DNA virus-triggered immune response. Mechanistically, enhances the 'Lys-48'-linked ubiquitination of STING1 leading to its proteasome-dependent degradation. Mediates the ubiquitination of the SIN3-HDAC chromatin remodeling complex component BRMS1. Modulates NCOA4-mediated ferritinophagy and ferroptosis in glioblastoma cells by ubiquitinating NCOA4, leading to its degradation. In terms of biological role, (Microbial infection) Promotes Zika virus replication by mediating envelope protein E ubiquitination. The sequence is that of E3 ubiquitin-protein ligase TRIM7 (TRIM7) from Homo sapiens (Human).